The following is a 195-amino-acid chain: Probable GTP-binding protein EngB (195 aa).

The region spanning 22-195 is the EngB-type G domain; sequence GLPEIALAGR…WGAIKKMINR (174 aa). GTP-binding positions include 30–37, 57–61, 75–78, 142–145, and 174–176; these read GRSNVGKS, GKTQT, DVPG, TKAD, and FSS. Mg(2+) contacts are provided by serine 37 and threonine 59.

It belongs to the TRAFAC class TrmE-Era-EngA-EngB-Septin-like GTPase superfamily. EngB GTPase family. Mg(2+) serves as cofactor.

Necessary for normal cell division and for the maintenance of normal septation. Its function is as follows. Binds GTP and GDP. The chain is Probable GTP-binding protein EngB from Bacillus subtilis (strain 168).